The following is a 64-amino-acid chain: Large ribosomal subunit protein bL35 (64 aa).

This sequence belongs to the bacterial ribosomal protein bL35 family.

The polypeptide is Large ribosomal subunit protein bL35 (Ureaplasma parvum serovar 3 (strain ATCC 27815 / 27 / NCTC 11736)).